An 85-amino-acid polypeptide reads, in one-letter code: Colicin E3 immunity protein (85 aa).

It belongs to the cloacin immunity protein family. As to quaternary structure, native colicin E3 is a 1:1 complex of A chain and protein B (Im3). Binds between the translocation and cytotoxic RNase domains of intact ColE3, blocking access to the 16S rRNA substrate. Forms a very tight 1:1 complex with the cytotoxic fragment (residues 456-551) of ColE3 (ceaC).

In terms of biological role, the cognate immunity protein for colicin E3 (ColE3), protects cells which harbor the plasmid ColE3 against the toxic action of ColE3. This protein inhibits the 16S RNA hydrolyzing activity of ColE3 by binding with very high affinity to the C-terminal catalytic domain of ColE3. This is Colicin E3 immunity protein from Escherichia coli.